The primary structure comprises 754 residues: MKELCYGSVCSGIEAASIAWEPLGMRPAWFAEIEPFPSAVLAHRWPHVANLGDMTKLAKKVLAGEIESPDVLVWGTPCQAFSIAGLRGGLDDERGALTLKYVELANAIDDKRSESFLKPTVIVWENVPGVLSSADNAFGCFLAGLAGEDAPFEPGDRPESGKSNAFWRWDGKTGCHAPKWPQCGCIYGPQRKVAWRILDAQYFGVAQRRRRVFVVASARTDLDPATVLFEFEGVRRNIAPRRKKKEIASAIIANGAAISGESLNPCLHADMPPSMKSTKAVNAFRMAAFGEYIDDETASTVKARDFKDATDLAVFSSTGAGFWSEGHGTLRAREQESHEHLVTLAFPERMSGTQHAATKNTSPSLMAKNPTAVCYEVRNAEVAVRRLTPVECERLQGFPDGHTLIPTEKRKKVNSDELAYLRNHYPDLSEEEAAMLAADGPRYKAIGNSMAIPVMRWIGDRITKAVCRQKEGSETKERKVKPAAEFERSIFKWAGGKFGVLEQIFRYLPEGKRLIEPFVGGGAVFTNAGYQENLLNDVNADLINFYKTLQREAHSLITLAHRFFQDYNTQEGYLAVRNAFNKQVYDDLHRAAAFLFLNRHCFNGLTRYNQAGEFNVGYGKYKTPYFPLQEMEAFLGAEGRSEFVCGDFAAVIEAAGEGDVIFCDPPYEPLPNTEGFTNYSGHDFKFEEQKRLVSLLTDAHRRGAKVLITNSGAPNIRELYHDSGFRVEPLFARRSVSCKGDTRGVAHDVLGILL.

The 466-residue stretch at 4-469 (LCYGSVCSGI…DRITKAVCRQ (466 aa)) folds into the SAM-dependent MTase C5-type domain. Cys-78 is an active-site residue.

Belongs to the class I-like SAM-binding methyltransferase superfamily. C5-methyltransferase family. As to quaternary structure, homodimer. It depends on Mg(2+) as a cofactor. The cofactor is Ca(2+).

It carries out the reaction a 2'-deoxyadenosine in DNA + S-adenosyl-L-methionine = an N(6)-methyl-2'-deoxyadenosine in DNA + S-adenosyl-L-homocysteine + H(+). Methyltransferase that methylates adenine residues in the ssDNA and dsDNA sequence 5'-AGACC-3'. Essential for genome packaging because methylation within the pac site makes the latter cleavable. May prevent degradation of viral DNA by the host restriction-modification antiviral defense system. The polypeptide is DNA N-6-adenine-methyltransferase (dmt) (Enterobacteriaceae (Bacteriophage P1)).